A 218-amino-acid chain; its full sequence is Tegument protein UL51 homolog (218 aa).

Cys11 is lipidated: S-palmitoyl cysteine; by host. Positions 199–218 (APPPVVRQPEHSGPTELALT) are disordered.

This sequence belongs to the herpesviridae UL51 family. In terms of assembly, homodimer. Interacts with BBRF2; the BBRF2-BSRF1 complexes oligomerize which might play a role in tethering the viral nucleocapsids to the host Golgi membrane during secondary envelopment. Interacts with BGLF3.5. Interacts with BALF1. Interacts with glycoprotein gB. Interacts with glycoprotein heterodimer gH/gL. Post-translationally, phosphorylated. In terms of processing, palmitoylation is necessary for Golgi localization.

It is found in the host cytoplasm. Its subcellular location is the virion. It localises to the host Golgi apparatus. Functionally, plays several roles during the time course of infection, including egress of virus particles from the perinuclear space and secondary envelopment of cytoplasmic capsids that bud into specific trans-Golgi network (TGN)-derived membranes. The chain is Tegument protein UL51 homolog from Homo sapiens (Human).